A 79-amino-acid polypeptide reads, in one-letter code: Small ribosomal subunit protein bS18 (79 aa).

It belongs to the bacterial ribosomal protein bS18 family. As to quaternary structure, part of the 30S ribosomal subunit. Forms a tight heterodimer with protein bS6.

Binds as a heterodimer with protein bS6 to the central domain of the 16S rRNA, where it helps stabilize the platform of the 30S subunit. In Ureaplasma parvum serovar 3 (strain ATCC 27815 / 27 / NCTC 11736), this protein is Small ribosomal subunit protein bS18.